We begin with the raw amino-acid sequence, 156 residues long: Keratin, high-sulfur matrix protein, B2B (156 aa).

Position 1 is an N-acetylalanine (alanine 1). 4 consecutive repeats follow at residues 26-35, 36-45, 46-55, and 56-65; these read PTCSQTSCCQ, PTSIQTSCCQ, PISIQTSCCQ, and PTCLQTSGCE.

In terms of biological role, the keratin products of mammalian epidermal derivatives such as wool and hair consist of microfibrils embedded in a rigid matrix of other proteins. The matrix proteins include the high-sulfur and high-tyrosine keratins, having molecular weights of 6-20 kDa, whereas the microfibrils contain the larger, low-sulfur keratins (40-56 kDa). The protein is Keratin, high-sulfur matrix protein, B2B of Ovis aries (Sheep).